Reading from the N-terminus, the 302-residue chain is Glutaminase (302 aa).

Ser61, Asn111, Glu155, Asn162, Tyr186, Tyr238, and Val256 together coordinate substrate.

It belongs to the glutaminase family. As to quaternary structure, homotetramer.

It carries out the reaction L-glutamine + H2O = L-glutamate + NH4(+). This chain is Glutaminase, found in Stutzerimonas stutzeri (strain A1501) (Pseudomonas stutzeri).